We begin with the raw amino-acid sequence, 107 residues long: Integration host factor subunit beta (107 aa).

A compositionally biased stretch (basic and acidic residues) spans 82-101 (PGKELRERVDRRAGEPLKAE). Residues 82-107 (PGKELRERVDRRAGEPLKAEEPDDDL) form a disordered region.

This sequence belongs to the bacterial histone-like protein family. In terms of assembly, heterodimer of an alpha and a beta chain.

In terms of biological role, this protein is one of the two subunits of integration host factor, a specific DNA-binding protein that functions in genetic recombination as well as in transcriptional and translational control. The protein is Integration host factor subunit beta of Paraburkholderia phytofirmans (strain DSM 17436 / LMG 22146 / PsJN) (Burkholderia phytofirmans).